Reading from the N-terminus, the 336-residue chain is Aspartate carbamoyltransferase catalytic subunit (336 aa).

2 residues coordinate carbamoyl phosphate: Arg-72 and Thr-73. L-aspartate is bound at residue Lys-100. Carbamoyl phosphate-binding residues include Arg-122, His-152, and Gln-155. L-aspartate is bound by residues Arg-185 and Arg-240. Positions 281 and 282 each coordinate carbamoyl phosphate.

This sequence belongs to the aspartate/ornithine carbamoyltransferase superfamily. ATCase family. Heterododecamer (2C3:3R2) of six catalytic PyrB chains organized as two trimers (C3), and six regulatory PyrI chains organized as three dimers (R2).

The enzyme catalyses carbamoyl phosphate + L-aspartate = N-carbamoyl-L-aspartate + phosphate + H(+). The protein operates within pyrimidine metabolism; UMP biosynthesis via de novo pathway; (S)-dihydroorotate from bicarbonate: step 2/3. Catalyzes the condensation of carbamoyl phosphate and aspartate to form carbamoyl aspartate and inorganic phosphate, the committed step in the de novo pyrimidine nucleotide biosynthesis pathway. The protein is Aspartate carbamoyltransferase catalytic subunit of Marinobacter nauticus (strain ATCC 700491 / DSM 11845 / VT8) (Marinobacter aquaeolei).